Consider the following 246-residue polypeptide: 14-3-3 protein beta/alpha (246 aa).

An N-acetylmethionine modification is found at methionine 1. Threonine 2 is subject to N-acetylthreonine; in 14-3-3 protein beta/alpha, N-terminally processed. Threonine 2 is modified (phosphothreonine). N6-acetyllysine is present on lysine 5. Lysine 51 carries the post-translational modification N6-acetyllysine; alternate. Lysine 51 is covalently cross-linked (Glycyl lysine isopeptide (Lys-Gly) (interchain with G-Cter in SUMO2); alternate). A Phosphoserine modification is found at serine 60. At lysine 70 the chain carries N6-acetyllysine. 2 positions are modified to 3'-nitrotyrosine: tyrosine 84 and tyrosine 106. Lysine 117 bears the N6-acetyllysine mark. 2 positions are modified to phosphoserine: serine 186 and serine 232.

Belongs to the 14-3-3 family. Homodimer. Interacts with SAMSN1 and PRKCE. Interacts with AKAP13. Interacts with SSH1 and TORC2/CRTC2. Interacts with ABL1; the interaction results in cytoplasmic location of ABL1 and inhibition of cABL-mediated apoptosis. Interacts with ROR2 (dimer); the interaction results in phosphorylation of YWHAB on tyrosine residues. Interacts with GAB2. Interacts with YAP1 (phosphorylated form). Interacts with the phosphorylated (by AKT1) form of SRPK2. Interacts with PKA-phosphorylated AANAT. Interacts with MYO1C. Interacts with SIRT2. Interacts with the 'Thr-369' phosphorylated form of DAPK2. Interacts with PI4KB, TBC1D22A and TBC1D22B. Interacts with the 'Ser-1134' and 'Ser-1161' phosphorylated form of SOS1. Interacts (via phosphorylated form) with YWHAB; this interaction occurs in a protein kinase AKT1-dependent manner. Interacts with SLITRK1. Interacts with SYNPO2 (phosphorylated form); YWHAB competes with ACTN2 for interaction with SYNPO2. Interacts with RIPOR2 (via phosphorylated form); this interaction occurs in a chemokine-dependent manner and does not compete for binding of RIPOR2 with RHOA nor blocks inhibition of RIPOR2-mediated RHOA activity. Interacts with MARK2 and MARK3. Interacts with TESK1; the interaction is dependent on the phosphorylation of TESK1 'Ser-439' and inhibits TESK1 kinase activity. Interacts with MEFV. Interacts with HDAC4. Interacts with ADAM22 (via C-terminus). Isoform alpha differs from isoform beta in being phosphorylated. Phosphorylated on Ser-60 by protein kinase C delta type catalytic subunit in a sphingosine-dependent fashion. Post-translationally, isoform Short contains a N-acetylmethionine at position 1.

The protein localises to the cytoplasm. It localises to the melanosome. Functionally, adapter protein implicated in the regulation of a large spectrum of both general and specialized signaling pathways. Binds to a large number of partners, usually by recognition of a phosphoserine or phosphothreonine motif. Binding generally results in the modulation of the activity of the binding partner. Negative regulator of osteogenesis. Blocks the nuclear translocation of the phosphorylated form (by AKT1) of SRPK2 and antagonizes its stimulatory effect on cyclin D1 expression resulting in blockage of neuronal apoptosis elicited by SRPK2. Negative regulator of signaling cascades that mediate activation of MAP kinases via AKAP13. This Mus musculus (Mouse) protein is 14-3-3 protein beta/alpha (Ywhab).